The sequence spans 493 residues: Cobyric acid synthase (493 aa).

Residues 252 to 443 (DLQITVVRLP…LHGLFDNGPW (192 aa)) form the GATase cobBQ-type domain. The Nucleophile role is filled by Cys-333. Residue His-435 is part of the active site.

Belongs to the CobB/CobQ family. CobQ subfamily.

Its pathway is cofactor biosynthesis; adenosylcobalamin biosynthesis. Functionally, catalyzes amidations at positions B, D, E, and G on adenosylcobyrinic A,C-diamide. NH(2) groups are provided by glutamine, and one molecule of ATP is hydrogenolyzed for each amidation. In Nostoc sp. (strain PCC 7120 / SAG 25.82 / UTEX 2576), this protein is Cobyric acid synthase.